We begin with the raw amino-acid sequence, 830 residues long: Beta-glucosidase A (830 aa).

D769 is an active-site residue.

Belongs to the glycosyl hydrolase 3 family.

The enzyme catalyses Hydrolysis of terminal, non-reducing beta-D-glucosyl residues with release of beta-D-glucose.. Functionally, b.fibrisolvens beta-glucosidase hydrolyzes cellobiose to a limited extent, cellotriose to cellobiose and glucose, and cellotetraose and cellopentaose to predominantly glucose. This Butyrivibrio fibrisolvens protein is Beta-glucosidase A (bglA).